The primary structure comprises 120 residues: Putative membrane protein insertion efficiency factor (120 aa).

Residues 93-120 are disordered; that stretch reads GRSCQTDVDGANDDWNPASKRGERESFV.

It belongs to the UPF0161 family.

Its subcellular location is the cell membrane. In terms of biological role, could be involved in insertion of integral membrane proteins into the membrane. The protein is Putative membrane protein insertion efficiency factor of Mycobacterium bovis (strain ATCC BAA-935 / AF2122/97).